Here is a 406-residue protein sequence, read N- to C-terminus: Succinylornithine transaminase (406 aa).

An N6-(pyridoxal phosphate)lysine modification is found at Lys252.

It belongs to the class-III pyridoxal-phosphate-dependent aminotransferase family. AstC subfamily. Requires pyridoxal 5'-phosphate as cofactor.

It catalyses the reaction N(2)-succinyl-L-ornithine + 2-oxoglutarate = N-succinyl-L-glutamate 5-semialdehyde + L-glutamate. The protein operates within amino-acid degradation; L-arginine degradation via AST pathway; L-glutamate and succinate from L-arginine: step 3/5. In terms of biological role, catalyzes the transamination of N(2)-succinylornithine and alpha-ketoglutarate into N(2)-succinylglutamate semialdehyde and glutamate. Can also act as an acetylornithine aminotransferase. The protein is Succinylornithine transaminase of Shigella sonnei (strain Ss046).